The primary structure comprises 625 residues: Vacuolar-sorting receptor 7 (625 aa).

A signal peptide spans 1–26 (MGLVNGRASLTFLLAALTIIAMVVEA). The Lumenal segment spans residues 27 to 564 (RFVVEKESIS…CIERYGSKTA (538 aa)). Residues 58–166 (DYGGFLIGSV…SFGDDLRQGF (109 aa)) enclose the PA domain. 3 N-linked (GlcNAc...) asparagine glycosylation sites follow: asparagine 292, asparagine 400, and asparagine 432. EGF-like domains follow at residues 414 to 464 (ETNE…TSCT) and 467 to 513 (GPAR…LTCE). Disulfide bonds link cysteine 418–cysteine 436, cysteine 425–cysteine 445, cysteine 447–cysteine 463, cysteine 471–cysteine 491, cysteine 478–cysteine 499, cysteine 501–cysteine 512, and cysteine 542–cysteine 555. The EGF-like 3; calcium-binding domain occupies 514 to 556 (DINECKERSVCQCSGCRCKNSWGGYKCSCSGDRLYINDQDTCI). The helical transmembrane segment at 565 to 585 (WWLTFLILAIVAVAGLAGYIF) threads the bilayer. The Cytoplasmic segment spans residues 586-625 (YKYRFRSYMDSEIMTIMSQYMPLESQRAREVPSEAEPFTL). Positions 605-608 (YMPL) match the Tyrosine-based internalization motif motif.

Belongs to the VSR (BP-80) family. As to expression, expressed at low levels in seedlings, roots, young leaves, flowers and siliques.

It is found in the golgi apparatus membrane. Functionally, vacuolar-sorting receptor (VSR) involved in clathrin-coated vesicles sorting from Golgi apparatus to vacuoles. In Arabidopsis thaliana (Mouse-ear cress), this protein is Vacuolar-sorting receptor 7 (VSR7).